The following is a 521-amino-acid chain: 2-isopropylmalate synthase (521 aa).

One can recognise a Pyruvate carboxyltransferase domain in the interval 5 to 267; it reads VIIFDTTLRD…HTNIKHQEIH (263 aa). Residues Asp-14, His-202, His-204, and Asn-238 each coordinate Mn(2+). Residues 392–521 are regulatory domain; it reads KLNYLSVQSG…FAQKTVMETL (130 aa).

The protein belongs to the alpha-IPM synthase/homocitrate synthase family. LeuA type 1 subfamily. Homodimer. The cofactor is Mn(2+).

It is found in the cytoplasm. It catalyses the reaction 3-methyl-2-oxobutanoate + acetyl-CoA + H2O = (2S)-2-isopropylmalate + CoA + H(+). The protein operates within amino-acid biosynthesis; L-leucine biosynthesis; L-leucine from 3-methyl-2-oxobutanoate: step 1/4. Functionally, catalyzes the condensation of the acetyl group of acetyl-CoA with 3-methyl-2-oxobutanoate (2-ketoisovalerate) to form 3-carboxy-3-hydroxy-4-methylpentanoate (2-isopropylmalate). This Tolumonas auensis (strain DSM 9187 / NBRC 110442 / TA 4) protein is 2-isopropylmalate synthase.